The following is a 388-amino-acid chain: UPF0496 protein 1 (388 aa).

The disordered stretch occupies residues 1 to 25 (MGNSSSSGSHRPPRPASSESALPPA). A coiled-coil region spans residues 198–227 (QAVYRQQLTMLEKLQQRKHRLDKKVRAIKA). Helical transmembrane passes span 234 to 254 (IIFA…AAIA) and 257 to 277 (PVAA…GKWI). A coiled-coil region spans residues 344-376 (VEEIKKKLEVFMKSVEDLGEQADRCSRDIRRAR).

This sequence belongs to the UPF0496 family.

It localises to the membrane. The chain is UPF0496 protein 1 from Oryza sativa subsp. japonica (Rice).